The sequence spans 308 residues: Cyclin-D4-1 (308 aa).

This sequence belongs to the cyclin family. Cyclin D subfamily. Interacts with CDKA-1, CDKB2-1, KRP4/ICK7, KRP5/ICK3, KRP6/ICK4 and KRP7/ICK5. As to expression, expressed in shoot apical meristem, leaf primordia vascular tissues and tapetum of anthers.

Functionally, may activate cell cycle in the root apical meristem (RAM) and promote embryonic root (radicle) protrusion. The chain is Cyclin-D4-1 (CYCD4-1) from Arabidopsis thaliana (Mouse-ear cress).